We begin with the raw amino-acid sequence, 819 residues long: Protein kinase C-binding protein NELL2 (819 aa).

A signal peptide spans 1–24 (MHAMESRVLLRTFCVILGLGAVWG). N-linked (GlcNAc...) asparagine glycans are attached at residues Asn56, Asn228, Asn296, and Asn301. In terms of domain architecture, Laminin G-like spans 67–231 (PRSIKASTAT…AQCPDLNRTC (165 aa)). The region spanning 275-334 (RTCTVKGTTYRESESWTDGCKNCTCLNGTIQCETLVCPAPDCPPKSAPAYVDGKCCKECK) is the VWFC 1 domain. An EGF-like 1 domain is found at 400-442 (GYDFCSEKHTCMENSVCRNLNDRAVCSCRDGFRALREDNAYCE). 3 cysteine pairs are disulfide-bonded: Cys404–Cys416, Cys410–Cys425, and Cys427–Cys441. Residues Asp443, Ile444, and Glu446 each contribute to the Ca(2+) site. Residues 443-484 (DIDECAEGRHYCRENTMCVNTPGSFMCICKTGYIRIDDYSCT) form the EGF-like 2; calcium-binding domain. 9 cysteine pairs are disulfide-bonded: Cys447–Cys460, Cys454–Cys469, Cys471–Cys483, Cys489–Cys502, Cys496–Cys511, Cys513–Cys524, Cys528–Cys538, Cys532–Cys544, and Cys546–Cys555. Positions 462, 463, and 466 each coordinate Ca(2+). Residues 485–525 (EHDECLTNQHNCDENALCFNTVGGHNCVCKPGYTGNGTTCK) form the EGF-like 3; calcium-binding domain. Asn520 carries N-linked (GlcNAc...) asparagine glycosylation. Residues 526-556 (AFCKDGCRNGGACIAANVCACPQGFTGPSCE) enclose the EGF-like 4 domain. Residue Thr551 is glycosylated (O-linked (GlcNAc...) threonine). Positions 558, 559, and 561 each coordinate Ca(2+). The 47-residue stretch at 558-604 (DIDECSEGFVQCDSRANCINLPGWYHCECRDGYHDNGMFAPGGESCE) folds into the EGF-like 5; calcium-binding domain. Cystine bridges form between Cys562/Cys575, Cys569/Cys584, and Cys586/Cys603. Residues Asn577, Leu578, and Trp581 each contribute to the Ca(2+) site. Ca(2+) contacts are provided by Asp605, Ile606, and Glu608. The 36-residue stretch at 605–640 (DIDECGTGRHSCTNDTICFNLDGGYDCRCPHGKNCT) folds into the EGF-like 6; calcium-binding domain. 3 cysteine pairs are disulfide-bonded: Cys609–Cys622, Cys616–Cys631, and Cys633–Cys639. An N-linked (GlcNAc...) asparagine glycan is attached at Asn618. Ca(2+) contacts are provided by Asn624, Leu625, and Gly628. Asn638 carries an N-linked (GlcNAc...) asparagine glycan. The VWFC 2 domain maps to 701 to 759 (SQCLHQNGETVYNSGDTWVQDCRQCRCLQGEVDCWPLACPEVECEFSVLPENECCPRCV).

As to quaternary structure, homotrimer. Interacts with NICOL1; this interaction triggers epididymal differentiation. Interacts (via EGF domains) with ROBO3 (via FN domains); binding to ROBO3 induces repulsive guidance cue for commissural axons. Expressed in brain and testis but not in epididymis. Expressed in regions flanking the commissural axon trajectory, including the ventral horn.

It is found in the secreted. Its function is as follows. Plays multiple roles in neural tissues, regulates neuronal proliferation, survival, differentiation, polarization, as well as axon guidance and synaptic functions. Plays an important role in axon development during neuronal differentiation through the MAPK intracellular signaling pathway. Via binding to its receptor ROBO3, plays a role in axon guidance, functioning as a repulsive axon guidance cue that contributes to commissural axon guidance to the midline. Required for neuron survival through the modulation of MAPK signaling pathways too. Involved in the regulation of hypothalamic GNRH secretion and the control of puberty. Epididymal-secreted protein that signals through a ROS1-pathway to regulate the epididymal initial segment (IS) maturation, sperm maturation and male fertility. The sequence is that of Protein kinase C-binding protein NELL2 from Mus musculus (Mouse).